Here is a 96-residue protein sequence, read N- to C-terminus: Cell division topological specificity factor (96 aa).

This sequence belongs to the MinE family.

Prevents the cell division inhibition by proteins MinC and MinD at internal division sites while permitting inhibition at polar sites. This ensures cell division at the proper site by restricting the formation of a division septum at the midpoint of the long axis of the cell. This is Cell division topological specificity factor from Nitrosococcus oceani (strain ATCC 19707 / BCRC 17464 / JCM 30415 / NCIMB 11848 / C-107).